The following is a 178-amino-acid chain: FANCD2 opposite strand protein (178 aa).

This Mus musculus (Mouse) protein is FANCD2 opposite strand protein (Fancd2os).